A 534-amino-acid polypeptide reads, in one-letter code: Bifunctional purine biosynthesis protein PurH (534 aa).

One can recognise an MGS-like domain in the interval 1 to 148 (MNTVRPIRRA…KNHQDVTIVV (148 aa)).

Belongs to the PurH family.

It catalyses the reaction (6R)-10-formyltetrahydrofolate + 5-amino-1-(5-phospho-beta-D-ribosyl)imidazole-4-carboxamide = 5-formamido-1-(5-phospho-D-ribosyl)imidazole-4-carboxamide + (6S)-5,6,7,8-tetrahydrofolate. The catalysed reaction is IMP + H2O = 5-formamido-1-(5-phospho-D-ribosyl)imidazole-4-carboxamide. It participates in purine metabolism; IMP biosynthesis via de novo pathway; 5-formamido-1-(5-phospho-D-ribosyl)imidazole-4-carboxamide from 5-amino-1-(5-phospho-D-ribosyl)imidazole-4-carboxamide (10-formyl THF route): step 1/1. Its pathway is purine metabolism; IMP biosynthesis via de novo pathway; IMP from 5-formamido-1-(5-phospho-D-ribosyl)imidazole-4-carboxamide: step 1/1. This Shewanella denitrificans (strain OS217 / ATCC BAA-1090 / DSM 15013) protein is Bifunctional purine biosynthesis protein PurH.